A 921-amino-acid chain; its full sequence is Translation initiation factor IF-2 (921 aa).

The disordered stretch occupies residues 1–296 (MADNNTPGDK…PGPQKQRGRL (296 aa)). Residues 80–89 (RPSGPRPGSS) show a composition bias toward low complexity. The span at 116–182 (ARVRDMEERR…AKKRFGEGEA (67 aa)) shows a compositional bias: basic and acidic residues. Over residues 183-257 (PRPATAAPQQ…LGRAPGVAAG (75 aa)) the composition is skewed to low complexity. The tr-type G domain maps to 417-586 (PRSPVVTVMG…MIALQADILD (170 aa)). Residues 426 to 433 (GHVDHGKT) form a G1 region. 426–433 (GHVDHGKT) is a binding site for GTP. The G2 stretch occupies residues 451-455 (GITQH). The segment at 474-477 (DTPG) is G3. GTP is bound by residues 474-478 (DTPGH) and 528-531 (NKID). A G4 region spans residues 528-531 (NKID). The segment at 564 to 566 (SAK) is G5.

This sequence belongs to the TRAFAC class translation factor GTPase superfamily. Classic translation factor GTPase family. IF-2 subfamily.

It is found in the cytoplasm. In terms of biological role, one of the essential components for the initiation of protein synthesis. Protects formylmethionyl-tRNA from spontaneous hydrolysis and promotes its binding to the 30S ribosomal subunits. Also involved in the hydrolysis of GTP during the formation of the 70S ribosomal complex. This Bradyrhizobium sp. (strain BTAi1 / ATCC BAA-1182) protein is Translation initiation factor IF-2.